A 344-amino-acid polypeptide reads, in one-letter code: N-acetyl-gamma-glutamyl-phosphate reductase (344 aa).

The active site involves C150.

Belongs to the NAGSA dehydrogenase family. Type 1 subfamily.

It localises to the cytoplasm. The enzyme catalyses N-acetyl-L-glutamate 5-semialdehyde + phosphate + NADP(+) = N-acetyl-L-glutamyl 5-phosphate + NADPH + H(+). It participates in amino-acid biosynthesis; L-arginine biosynthesis; N(2)-acetyl-L-ornithine from L-glutamate: step 3/4. Functionally, catalyzes the NADPH-dependent reduction of N-acetyl-5-glutamyl phosphate to yield N-acetyl-L-glutamate 5-semialdehyde. In Pseudomonas paraeruginosa (strain DSM 24068 / PA7) (Pseudomonas aeruginosa (strain PA7)), this protein is N-acetyl-gamma-glutamyl-phosphate reductase.